Here is a 235-residue protein sequence, read N- to C-terminus: Rab-like protein 3 (235 aa).

The tract at residues 1 to 235 is small GTPase-like; the sequence is MASLDRVKVL…GGNFKSLHYD (235 aa). Residues 16 to 21, 148 to 150, and 179 to 180 contribute to the GTP site; these read GVGKSS, KLD, and DC.

Belongs to the small GTPase superfamily. Rab family. In terms of assembly, homodimer.

Functionally, required for KRAS signaling regulation and modulation of cell proliferation. Regulator of KRAS prenylation, and probably prenylation of other small GTPases. Required for lymphocyte development and function. Not required for myeloid cell development. The polypeptide is Rab-like protein 3 (rabl3) (Xenopus tropicalis (Western clawed frog)).